Reading from the N-terminus, the 495-residue chain is MALDRSIISKTTWYSVVLWMMVVLVRVHGAAARPNRKEWDSVIKLPTEPVDADSDEVGTRWAVLVAGSNGYGNYRHQADVCHAYQLLIKGGLKEENIVVFMYDDIATNELNPRHGVIINHPEGEDLYAGVPKDYTGDNVTTENLFAVILGDKSKLKGGSGKVINSKPEDRIFIYYSDHGGPGILGMPNMPYLYAMDFIDVLKKKHASGSYKEMVIYVEACESGSVFEGIMPKDLNIYVTTASNAQENSWGTYCPGMDPSPPPEYITCLGDLYSVAWMEDSEAHNLKRESVKQQYKSVKQRTSNFNNYAMGSHVMQYGDTNITAEKLYLYQGFDPATVNFPPQNGRLETKMEVVNQRDAELFLLWQMYQRSNHQSENKTDILKQIAETVKHRKHIDGSVELIGVLLYGPGKGSSVLQSVRAPGSSLVDDWTCLKSMVRVFETHCGTLTQYGMKHMRAFANICNSGVSEASMEEACLAACEGYNAGLFHPSNRGYSA.

The N-terminal stretch at methionine 1–alanine 32 is a signal peptide. Asparagine 138 is a glycosylation site (N-linked (GlcNAc...) asparagine). Histidine 178 is an active-site residue. Cysteine 220 serves as the catalytic Nucleophile. Cysteines 253 and 267 form a disulfide. Residues asparagine 320 and asparagine 376 are each glycosylated (N-linked (GlcNAc...) asparagine). 2 disulfides stabilise this stretch: cysteine 431/cysteine 461 and cysteine 443/cysteine 478.

The protein belongs to the peptidase C13 family.

In terms of biological role, asparagine-specific endopeptidase involved in the processing of vacuolar seed protein precursors into the mature forms. This is Vacuolar-processing enzyme from Glycine max (Soybean).